The following is a 321-amino-acid chain: Lipoyl synthase (321 aa).

C68, C73, C79, C94, C98, C101, and S308 together coordinate [4Fe-4S] cluster. The Radical SAM core domain occupies 80-297 (FNHGTATFMI…KAEAMAMGFT (218 aa)).

This sequence belongs to the radical SAM superfamily. Lipoyl synthase family. Requires [4Fe-4S] cluster as cofactor.

The protein resides in the cytoplasm. The catalysed reaction is [[Fe-S] cluster scaffold protein carrying a second [4Fe-4S](2+) cluster] + N(6)-octanoyl-L-lysyl-[protein] + 2 oxidized [2Fe-2S]-[ferredoxin] + 2 S-adenosyl-L-methionine + 4 H(+) = [[Fe-S] cluster scaffold protein] + N(6)-[(R)-dihydrolipoyl]-L-lysyl-[protein] + 4 Fe(3+) + 2 hydrogen sulfide + 2 5'-deoxyadenosine + 2 L-methionine + 2 reduced [2Fe-2S]-[ferredoxin]. The protein operates within protein modification; protein lipoylation via endogenous pathway; protein N(6)-(lipoyl)lysine from octanoyl-[acyl-carrier-protein]: step 2/2. Catalyzes the radical-mediated insertion of two sulfur atoms into the C-6 and C-8 positions of the octanoyl moiety bound to the lipoyl domains of lipoate-dependent enzymes, thereby converting the octanoylated domains into lipoylated derivatives. The protein is Lipoyl synthase of Pectobacterium atrosepticum (strain SCRI 1043 / ATCC BAA-672) (Erwinia carotovora subsp. atroseptica).